Here is a 596-residue protein sequence, read N- to C-terminus: Neuroepithelial cell-transforming gene 1 protein (596 aa).

Met-1 is modified (N-acetylmethionine). Residues 1 to 44 (MEPELAAQKQPRPRRRSRRASGLSTEGATGPSADTSGSELDGRC) are disordered. Residues 1–74 (MEPELAAQKQ…LKRKRREKDD (74 aa)) form a necessary for nuclear localization region. Residues 12 to 19 (RPRRRSRR) carry the Nuclear localization signal motif. Residues Ser-21 and Ser-32 each carry the phosphoserine modification. Residues 22 to 38 (GLSTEGATGPSADTSGS) are compositionally biased toward polar residues. The short motif at 66–72 (KRKRREK) is the Nuclear localization signal element. A phosphoserine mark is found at Ser-100, Ser-106, and Ser-122. Residues 127-146 (GDHRSPASAQKFSSRSTVPT) form a disordered region. Positions 133–145 (ASAQKFSSRSTVP) are enriched in polar residues. Positions 174-356 (RRQEAIYEMS…QGVLSDINLK (183 aa)) constitute a DH domain. A PH domain is found at 386-501 (VLLCHGELRS…WFNCIRAAIA (116 aa)). At Ser-508 the chain carries Phosphoserine. Residues 562 to 596 (MAEDSKSLKTHQTQPGIRRARDKALSGGKRKETLV) are disordered.

Interacts with RHOA in its GTP- and GDP-bound states, and with CDC42 in its GTP-bound state. Interacts with the PDZ 1 domain of BAIAP1. Widely expressed.

The protein localises to the cytoplasm. It is found in the nucleus. Its function is as follows. Acts as a guanine nucleotide exchange factor (GEF) for RhoA GTPase. May be involved in activation of the SAPK/JNK pathway Stimulates genotoxic stress-induced RHOB activity in breast cancer cells leading to their cell death. This chain is Neuroepithelial cell-transforming gene 1 protein (NET1), found in Homo sapiens (Human).